The primary structure comprises 437 residues: O-antigen export system ATP-binding protein RfbB (437 aa).

An ABC transporter domain is found at 37-256 (LRGKRQSRDA…YREAISLAEA (220 aa)). Position 69–76 (69–76 (GRNGSGKS)) interacts with ATP.

Belongs to the ABC transporter superfamily.

It localises to the cell inner membrane. Its function is as follows. May form an ATP-driven O-antigen export apparatus, in association with RfbA. This chain is O-antigen export system ATP-binding protein RfbB (rfbB), found in Myxococcus xanthus.